The sequence spans 504 residues: Xylose import ATP-binding protein XylG (504 aa).

2 consecutive ABC transporter domains span residues 5-242 (LEMK…VGRE) and 259-500 (LRVE…VMEA). ATP is bound at residue 37–44 (GENGSGKS).

Belongs to the ABC transporter superfamily. Xylose importer (TC 3.A.1.2.4) family. As to quaternary structure, the complex is composed of two ATP-binding proteins (XylG), two transmembrane proteins (XylH) and a solute-binding protein (XylF).

The protein resides in the cell inner membrane. The catalysed reaction is D-xylose(out) + ATP + H2O = D-xylose(in) + ADP + phosphate + H(+). Its function is as follows. Part of the ABC transporter complex XylFGH involved in xylose import. Responsible for energy coupling to the transport system. The protein is Xylose import ATP-binding protein XylG of Histophilus somni (strain 129Pt) (Haemophilus somnus).